The following is a 192-amino-acid chain: Probable cobalt-precorrin-6B C(15)-methyltransferase (decarboxylating) (192 aa).

Residues T20, 44-48 (GSGTG), E68, and A96 each bind S-adenosyl-L-methionine.

It belongs to the methyltransferase superfamily. Archaeal-type CbiT family.

It carries out the reaction Co-precorrin-6B + S-adenosyl-L-methionine = Co-precorrin-7 + S-adenosyl-L-homocysteine + CO2. It participates in cofactor biosynthesis; adenosylcobalamin biosynthesis; cob(II)yrinate a,c-diamide from sirohydrochlorin (anaerobic route): step 8/10. In terms of biological role, catalyzes the methylation of C-15 in cobalt-precorrin-6B followed by the decarboxylation of C-12 to form cobalt-precorrin-7. This chain is Probable cobalt-precorrin-6B C(15)-methyltransferase (decarboxylating), found in Sulfurisphaera tokodaii (strain DSM 16993 / JCM 10545 / NBRC 100140 / 7) (Sulfolobus tokodaii).